Reading from the N-terminus, the 903-residue chain is Protein translocase subunit SecA (903 aa).

Residues Q87, 105–109, and D512 each bind ATP; that span reads GEGKT. Residues 853–903 form a disordered region; sequence KQQQLSHYEENALVTEDPNAPATAERKVGRNDPCPCGSGKKYKQCHGRLQS. Residues C886, C888, C897, and H898 each contribute to the Zn(2+) site. Basic residues predominate over residues 892–903; that stretch reads KKYKQCHGRLQS.

Belongs to the SecA family. Monomer and homodimer. Part of the essential Sec protein translocation apparatus which comprises SecA, SecYEG and auxiliary proteins SecDF-YajC and YidC. Zn(2+) is required as a cofactor.

It is found in the cell inner membrane. It localises to the cytoplasm. The enzyme catalyses ATP + H2O + cellular proteinSide 1 = ADP + phosphate + cellular proteinSide 2.. Part of the Sec protein translocase complex. Interacts with the SecYEG preprotein conducting channel. Has a central role in coupling the hydrolysis of ATP to the transfer of proteins into and across the cell membrane, serving both as a receptor for the preprotein-SecB complex and as an ATP-driven molecular motor driving the stepwise translocation of polypeptide chains across the membrane. The chain is Protein translocase subunit SecA from Serratia proteamaculans (strain 568).